A 236-amino-acid polypeptide reads, in one-letter code: 3-deoxy-D-manno-octulosonic acid kinase (236 aa).

Residue Asp-167 is part of the active site.

Belongs to the protein kinase superfamily. KdkA/RfaP family.

It localises to the cell inner membrane. The enzyme catalyses an alpha-Kdo-(2-&gt;6)-lipid IVA + ATP = a 4-O-phospho-alpha-Kdo-(2-&gt;6)-lipid IVA + ADP + H(+). It participates in bacterial outer membrane biogenesis; LPS core biosynthesis. In terms of biological role, catalyzes the ATP-dependent phosphorylation of the 3-deoxy-D-manno-octulosonic acid (Kdo) residue in Kdo-lipid IV(A) at the 4-OH position. The polypeptide is 3-deoxy-D-manno-octulosonic acid kinase (Vibrio vulnificus (strain YJ016)).